A 254-amino-acid polypeptide reads, in one-letter code: 3-deoxy-manno-octulosonate cytidylyltransferase (254 aa).

Belongs to the KdsB family.

It localises to the cytoplasm. The catalysed reaction is 3-deoxy-alpha-D-manno-oct-2-ulosonate + CTP = CMP-3-deoxy-beta-D-manno-octulosonate + diphosphate. The protein operates within nucleotide-sugar biosynthesis; CMP-3-deoxy-D-manno-octulosonate biosynthesis; CMP-3-deoxy-D-manno-octulosonate from 3-deoxy-D-manno-octulosonate and CTP: step 1/1. Its pathway is bacterial outer membrane biogenesis; lipopolysaccharide biosynthesis. In terms of biological role, activates KDO (a required 8-carbon sugar) for incorporation into bacterial lipopolysaccharide in Gram-negative bacteria. This is 3-deoxy-manno-octulosonate cytidylyltransferase from Tolumonas auensis (strain DSM 9187 / NBRC 110442 / TA 4).